Reading from the N-terminus, the 374-residue chain is Trichodiene synthase (374 aa).

The Mg(2+) site is built by Asp-100, Glu-164, Asn-225, Ser-229, Glu-233, Asp-239, and Ile-241. Residues 100–104 (DDSKD) form an aspartate-rich domain region.

This sequence belongs to the trichodiene synthase family. Mg(2+) serves as cofactor. It depends on Mn(2+) as a cofactor.

The catalysed reaction is (2E,6E)-farnesyl diphosphate = trichodiene + diphosphate. Its pathway is sesquiterpene biosynthesis; trichothecene biosynthesis. Benzyl triethylammonium cation (BTAC) acts as a competitive inhibitor of trichodiene synthase reaction in the presence of pyrophosphate (PPi). Trichodiene synthase; part of the core gene cluster that mediates the biosynthesis of trichothecenes, a very large family of chemically related bicyclic sesquiterpene compounds acting as mycotoxins, including T2-toxin. The biosynthesis of trichothecenes begins with the cyclization of farnesyl diphosphate to trichodiene and is catalyzed by the trichodiene synthase TRI5. Trichodiene undergoes a series of oxygenations catalyzed by the cytochrome P450 monooxygenase TRI4. TRI4 controls the addition of four oxygens at C-2, C-3, C-11, and the C-12, C-13-epoxide to form the intermediate isotrichotriol. Isotrichotriol then undergoes a non-enzymatic isomerization and cyclization to form isotrichodermol. During this process, the oxygen at the C-2 position becomes the pyran ring oxygen and the hydroxyl group at C-11 is lost. More complex type A trichothecenes are built by modifying isotrichodermol through a series of paired hydroxylation and acetylation or acylation steps. Isotrichodermol is converted to isotrichodermin by the acetyltransferase TRI101. TRI101 encodes a C-3 transacetylase that acts as a self-protection or resistance factor during biosynthesis and that the presence of a free C-3 hydroxyl group is a key component of Fusarium trichothecene phytotoxicity. A second hydroxyl group is added to C-15 by the trichothecene C-15 hydroxylase TRI11, producing 15-decalonectrin, which is then acetylated by TRI3, producing calonectrin. A third hydroxyl group is added at C-4 by the cytochrome P450 monooxygenase TRI13, converting calonectrin to 3,15-diacetoxyspirpenol, which is subsequently acetylated by the acetyltransferase TRI7. A fourth hydroxyl group is added to C-8 by the cytochrome P450 monooxygenase TRI1, followed by the addition of an isovaleryl moiety by TRI16. Finally, the acetyl group is removed from the C-3 position by the trichothecene C-3 esterase TRI8 to produce T-2 toxin. This is Trichodiene synthase from Fusarium sporotrichioides.